We begin with the raw amino-acid sequence, 527 residues long: Bifunctional purine biosynthesis protein PurH (527 aa).

The region spanning 1-149 (MASDFLPVRR…KNFARVAVAA (149 aa)) is the MGS-like domain.

The protein belongs to the PurH family.

The enzyme catalyses (6R)-10-formyltetrahydrofolate + 5-amino-1-(5-phospho-beta-D-ribosyl)imidazole-4-carboxamide = 5-formamido-1-(5-phospho-D-ribosyl)imidazole-4-carboxamide + (6S)-5,6,7,8-tetrahydrofolate. The catalysed reaction is IMP + H2O = 5-formamido-1-(5-phospho-D-ribosyl)imidazole-4-carboxamide. It participates in purine metabolism; IMP biosynthesis via de novo pathway; 5-formamido-1-(5-phospho-D-ribosyl)imidazole-4-carboxamide from 5-amino-1-(5-phospho-D-ribosyl)imidazole-4-carboxamide (10-formyl THF route): step 1/1. The protein operates within purine metabolism; IMP biosynthesis via de novo pathway; IMP from 5-formamido-1-(5-phospho-D-ribosyl)imidazole-4-carboxamide: step 1/1. The sequence is that of Bifunctional purine biosynthesis protein PurH from Xanthomonas axonopodis pv. citri (strain 306).